Here is a 220-residue protein sequence, read N- to C-terminus: NADH-quinone oxidoreductase subunit I (220 aa).

2 4Fe-4S ferredoxin-type domains span residues leucine 71–histidine 102 and aspartate 112–arginine 141. 8 residues coordinate [4Fe-4S] cluster: cysteine 82, cysteine 85, cysteine 88, cysteine 92, cysteine 121, cysteine 124, cysteine 127, and cysteine 131. Residues methionine 187 to valine 220 are disordered. The span at proline 198–valine 220 shows a compositional bias: basic and acidic residues.

Belongs to the complex I 23 kDa subunit family. As to quaternary structure, NDH-1 is composed of 14 different subunits. Subunits NuoA, H, J, K, L, M, N constitute the membrane sector of the complex. It depends on [4Fe-4S] cluster as a cofactor.

It localises to the cell inner membrane. The catalysed reaction is a quinone + NADH + 5 H(+)(in) = a quinol + NAD(+) + 4 H(+)(out). Its function is as follows. NDH-1 shuttles electrons from NADH, via FMN and iron-sulfur (Fe-S) centers, to quinones in the respiratory chain. The immediate electron acceptor for the enzyme in this species is believed to be ubiquinone. Couples the redox reaction to proton translocation (for every two electrons transferred, four hydrogen ions are translocated across the cytoplasmic membrane), and thus conserves the redox energy in a proton gradient. This Helicobacter pylori (strain J99 / ATCC 700824) (Campylobacter pylori J99) protein is NADH-quinone oxidoreductase subunit I.